A 344-amino-acid polypeptide reads, in one-letter code: Gibberellin receptor GID1C (344 aa).

Ala2 carries the post-translational modification N-acetylalanine. The Involved in the stabilization of the negatively charged intermediate by the formation of the oxyanion hole motif lies at 111 to 113; sequence HGG. Gibberellin A4 contacts are provided by residues 113-114, Tyr125, and Ser189; that span reads GS. Ser114, Tyr125, Ser189, and Phe236 together coordinate gibberellin A3. Residue Ser189 is part of the active site. Residue Asp287 is part of the active site. Gly318 contacts gibberellin A4. Residue Gly318 participates in gibberellin A3 binding.

This sequence belongs to the 'GDXG' lipolytic enzyme family. As to quaternary structure, interacts with the DELLA proteins GAI, RGA, RGL1, RGL2 and RGL3 in a GA-dependent manner. As to expression, widely expressed.

The protein resides in the nucleus. Functions as a soluble gibberellin (GA) receptor. GA is an essential hormone that regulates growth and development in plants. Binds with high affinity the biologically active gibberellin GA4, but has no affinity for the biologically inactive GAs. In response to GA, interacts with specific DELLA proteins, known as repressors of GA-induced growth, and targets them for degradation via proteasome. Seems to be required for GA signaling that controls root growth, seed germination and stem elongation. Partially redundant with GID1A and GID1B. This is Gibberellin receptor GID1C (GID1C) from Arabidopsis thaliana (Mouse-ear cress).